A 367-amino-acid polypeptide reads, in one-letter code: uncharacterized protein (367 aa).

A helical membrane pass occupies residues I6–G26.

The protein to E.coli YdgA and YihF.

It is found in the membrane. This is an uncharacterized protein from Haemophilus influenzae (strain ATCC 51907 / DSM 11121 / KW20 / Rd).